Here is a 421-residue protein sequence, read N- to C-terminus: MDKIVIKGGNKLTGEVKVEGAKNAVLPILTASLLASDKPSKLVNVPALSDVETINNVLTTLNADVTYKKDENAVVVDATKTLNEEAPYEYVSKMRASILVMGPLLARLGHAIVALPGGCAIGSRPIEQHIKGFEALGAEIHLENGNIYANAKDGLKGTSIHLDFPSVGATQNIIMAASLAKGKTLIENAAKEPEIVDLANYINEMGGRITGAGTDTITINGVESLHGVEHAIIPDRIEAGTLLIAGAITRGDIFVRGAIKEHMASLVYKLEEMGVELDYQEDGIRVRAEGELQPVDIKTLPHPGFPTDMQSQMMALLLTANGHKVVTETVFENRFMHVAEFKRMNANINVEGRSAKLEGKSQLQGAQVKATDLRAAAALILAGLVADGKTSVTELTHLDRGYVDLHGKLKQLGADIERIND.

Phosphoenolpyruvate is bound at residue 22–23; sequence KN. Position 95 (R95) interacts with UDP-N-acetyl-alpha-D-glucosamine. C119 functions as the Proton donor in the catalytic mechanism. C119 bears the 2-(S-cysteinyl)pyruvic acid O-phosphothioketal mark. UDP-N-acetyl-alpha-D-glucosamine is bound by residues 124–128, D308, and V330; that span reads RPIEQ.

The protein belongs to the EPSP synthase family. MurA subfamily.

The protein localises to the cytoplasm. It catalyses the reaction phosphoenolpyruvate + UDP-N-acetyl-alpha-D-glucosamine = UDP-N-acetyl-3-O-(1-carboxyvinyl)-alpha-D-glucosamine + phosphate. Its pathway is cell wall biogenesis; peptidoglycan biosynthesis. Its function is as follows. Cell wall formation. Adds enolpyruvyl to UDP-N-acetylglucosamine. In Staphylococcus aureus (strain MW2), this protein is UDP-N-acetylglucosamine 1-carboxyvinyltransferase 1.